We begin with the raw amino-acid sequence, 167 residues long: NAD(P)H-quinone oxidoreductase subunit I, chloroplastic (167 aa).

2 consecutive 4Fe-4S ferredoxin-type domains span residues 55-84 (GRIHFEFDKCIACEVCVRVCPIDLPVVDWK) and 95-124 (LNYSIDFGICIFCGNCVEYCPTNCLSMTEE). [4Fe-4S] cluster contacts are provided by Cys64, Cys67, Cys70, Cys74, Cys104, Cys107, Cys110, and Cys114.

The protein belongs to the complex I 23 kDa subunit family. In terms of assembly, NDH is composed of at least 16 different subunits, 5 of which are encoded in the nucleus. Requires [4Fe-4S] cluster as cofactor.

Its subcellular location is the plastid. The protein resides in the chloroplast thylakoid membrane. The enzyme catalyses a plastoquinone + NADH + (n+1) H(+)(in) = a plastoquinol + NAD(+) + n H(+)(out). It catalyses the reaction a plastoquinone + NADPH + (n+1) H(+)(in) = a plastoquinol + NADP(+) + n H(+)(out). In terms of biological role, NDH shuttles electrons from NAD(P)H:plastoquinone, via FMN and iron-sulfur (Fe-S) centers, to quinones in the photosynthetic chain and possibly in a chloroplast respiratory chain. The immediate electron acceptor for the enzyme in this species is believed to be plastoquinone. Couples the redox reaction to proton translocation, and thus conserves the redox energy in a proton gradient. The protein is NAD(P)H-quinone oxidoreductase subunit I, chloroplastic of Vitis vinifera (Grape).